A 70-amino-acid polypeptide reads, in one-letter code: Large ribosomal subunit protein eL38 (70 aa).

It belongs to the eukaryotic ribosomal protein eL38 family.

This Julodis onopordi (Jewel beetle) protein is Large ribosomal subunit protein eL38 (RpL38).